Here is a 615-residue protein sequence, read N- to C-terminus: Medium-chain acyl-CoA ligase ACSF2, mitochondrial (615 aa).

A mitochondrion-targeting transit peptide spans 1–41; that stretch reads MAVYVGMLRLGRLCAGSSGVLGARAALSRSWQEARLQGVRF. Lys179 is modified (N6-acetyllysine). An N6-acetyllysine; alternate modification is found at Lys182. The residue at position 182 (Lys182) is an N6-succinyllysine; alternate. 263 to 271 is a binding site for ATP; it reads TSGTTGSPK. An N6-acetyllysine mark is found at Lys340 and Lys398. Position 478 is an N6-succinyllysine (Lys478). Asp493 and Arg508 together coordinate ATP. The residue at position 510 (Lys510) is an N6-acetyllysine. Lys544 and Lys570 each carry N6-acetyllysine; alternate. N6-succinyllysine; alternate is present on residues Lys544 and Lys570. Lys599 provides a ligand contact to ATP. An N6-succinyllysine modification is found at Lys599.

It belongs to the ATP-dependent AMP-binding enzyme family.

The protein localises to the mitochondrion. The catalysed reaction is a medium-chain fatty acid + ATP + CoA = a medium-chain fatty acyl-CoA + AMP + diphosphate. It carries out the reaction octanoate + ATP + CoA = octanoyl-CoA + AMP + diphosphate. In terms of biological role, acyl-CoA synthases catalyze the initial reaction in fatty acid metabolism, by forming a thioester with CoA. Has some preference toward medium-chain substrates. Plays a role in adipocyte differentiation. This Homo sapiens (Human) protein is Medium-chain acyl-CoA ligase ACSF2, mitochondrial.